We begin with the raw amino-acid sequence, 323 residues long: Tetraacyldisaccharide 4'-kinase (323 aa).

T56–T63 contributes to the ATP binding site.

This sequence belongs to the LpxK family.

The catalysed reaction is a lipid A disaccharide + ATP = a lipid IVA + ADP + H(+). It functions in the pathway glycolipid biosynthesis; lipid IV(A) biosynthesis; lipid IV(A) from (3R)-3-hydroxytetradecanoyl-[acyl-carrier-protein] and UDP-N-acetyl-alpha-D-glucosamine: step 6/6. In terms of biological role, transfers the gamma-phosphate of ATP to the 4'-position of a tetraacyldisaccharide 1-phosphate intermediate (termed DS-1-P) to form tetraacyldisaccharide 1,4'-bis-phosphate (lipid IVA). The polypeptide is Tetraacyldisaccharide 4'-kinase (Legionella pneumophila (strain Corby)).